The sequence spans 241 residues: Small ribosomal subunit protein uS3 (241 aa).

A KH type-2 domain is found at 39–107; it reads IRTYLKKELY…PLSVNIKEEK (69 aa). Positions 214–241 are disordered; it reads AEVKEEQQKEGARRPKRAPKRENSGKAE. Positions 215 to 226 are enriched in basic and acidic residues; it reads EVKEEQQKEGAR.

This sequence belongs to the universal ribosomal protein uS3 family. In terms of assembly, part of the 30S ribosomal subunit. Forms a tight complex with proteins S10 and S14.

Binds the lower part of the 30S subunit head. Binds mRNA in the 70S ribosome, positioning it for translation. In Sulfurimonas denitrificans (strain ATCC 33889 / DSM 1251) (Thiomicrospira denitrificans (strain ATCC 33889 / DSM 1251)), this protein is Small ribosomal subunit protein uS3.